Reading from the N-terminus, the 218-residue chain is MERYNLKAEVRKDTGKGVARKLRRNGLIPGVIYGKTRKPQPLAVDAKDLNKVVGGNAILDMTLVDGDKEEKETAVVKDLQRDPVQGNILHVDFQHISMTDKLTVSVPVHIVGNARGVVAGGVLQQLAREIEVECLPTDIPDEIEVDITDLGLGDSLSVGDIEPPANTDFITPEDEVIVTIVAPSEAVEEEVPAEDEEIMPEPEVIGEEDEGDEEEPEE.

Positions 186-218 (AVEEEVPAEDEEIMPEPEVIGEEDEGDEEEPEE) are disordered.

The protein belongs to the bacterial ribosomal protein bL25 family. CTC subfamily. As to quaternary structure, part of the 50S ribosomal subunit; part of the 5S rRNA/L5/L18/L25 subcomplex. Contacts the 5S rRNA. Binds to the 5S rRNA independently of L5 and L18.

This is one of the proteins that binds to the 5S RNA in the ribosome where it forms part of the central protuberance. In Halothermothrix orenii (strain H 168 / OCM 544 / DSM 9562), this protein is Large ribosomal subunit protein bL25.